The chain runs to 206 residues: Isochorismatase family protein 1A (206 aa).

This sequence belongs to the isochorismatase family.

This chain is Isochorismatase family protein 1A, found in Dictyostelium discoideum (Social amoeba).